We begin with the raw amino-acid sequence, 78 residues long: Translational regulator CsrA (78 aa).

Belongs to the CsrA/RsmA family. Homodimer; the beta-strands of each monomer intercalate to form a hydrophobic core, while the alpha-helices form wings that extend away from the core.

It localises to the cytoplasm. A translational regulator that binds mRNA to regulate translation initiation and/or mRNA stability. Usually binds in the 5'-UTR at or near the Shine-Dalgarno sequence preventing ribosome-binding, thus repressing translation. Its main target seems to be the major flagellin gene, while its function is anatagonized by FliW. This chain is Translational regulator CsrA, found in Nitratidesulfovibrio vulgaris (strain ATCC 29579 / DSM 644 / CCUG 34227 / NCIMB 8303 / VKM B-1760 / Hildenborough) (Desulfovibrio vulgaris).